The chain runs to 273 residues: Ribosomal RNA small subunit methyltransferase A (273 aa).

Residues Asn18, Leu20, Gly45, Glu66, Asp91, and Asn113 each contribute to the S-adenosyl-L-methionine site.

The protein belongs to the class I-like SAM-binding methyltransferase superfamily. rRNA adenine N(6)-methyltransferase family. RsmA subfamily.

The protein localises to the cytoplasm. The enzyme catalyses adenosine(1518)/adenosine(1519) in 16S rRNA + 4 S-adenosyl-L-methionine = N(6)-dimethyladenosine(1518)/N(6)-dimethyladenosine(1519) in 16S rRNA + 4 S-adenosyl-L-homocysteine + 4 H(+). Functionally, specifically dimethylates two adjacent adenosines (A1518 and A1519) in the loop of a conserved hairpin near the 3'-end of 16S rRNA in the 30S particle. May play a critical role in biogenesis of 30S subunits. The sequence is that of Ribosomal RNA small subunit methyltransferase A from Shigella dysenteriae serotype 1 (strain Sd197).